The sequence spans 224 residues: Ribose-5-phosphate isomerase A (224 aa).

Substrate contacts are provided by residues 34-37, 87-90, and 100-103; these read TGST, DGAD, and KGGG. Glutamate 109 (proton acceptor) is an active-site residue. Lysine 127 is a binding site for substrate.

Belongs to the ribose 5-phosphate isomerase family. In terms of assembly, homodimer.

It catalyses the reaction aldehydo-D-ribose 5-phosphate = D-ribulose 5-phosphate. The protein operates within carbohydrate degradation; pentose phosphate pathway; D-ribose 5-phosphate from D-ribulose 5-phosphate (non-oxidative stage): step 1/1. In terms of biological role, catalyzes the reversible conversion of ribose-5-phosphate to ribulose 5-phosphate. The protein is Ribose-5-phosphate isomerase A of Francisella tularensis subsp. tularensis (strain FSC 198).